Reading from the N-terminus, the 325-residue chain is Siroheme decarboxylase NirDL subunit (325 aa).

It belongs to the Ahb/Nir family. In terms of assembly, forms a complex composed of NirDL, NirG and NirH. All proteins are required for the total conversion of siroheme to didecarboxysiroheme.

The enzyme catalyses siroheme + 2 H(+) = 12,18-didecarboxysiroheme + 2 CO2. It functions in the pathway porphyrin-containing compound metabolism. In terms of biological role, involved in heme d1 biosynthesis. Catalyzes the decarboxylation of siroheme into didecarboxysiroheme. This chain is Siroheme decarboxylase NirDL subunit, found in Paracoccus denitrificans (strain Pd 1222).